The primary structure comprises 547 residues: Glucose-6-phosphate isomerase (547 aa).

Glu351 acts as the Proton donor in catalysis. Active-site residues include His382 and Lys510.

Belongs to the GPI family.

It localises to the cytoplasm. The enzyme catalyses alpha-D-glucose 6-phosphate = beta-D-fructose 6-phosphate. It participates in carbohydrate biosynthesis; gluconeogenesis. Its pathway is carbohydrate degradation; glycolysis; D-glyceraldehyde 3-phosphate and glycerone phosphate from D-glucose: step 2/4. Its function is as follows. Catalyzes the reversible isomerization of glucose-6-phosphate to fructose-6-phosphate. This chain is Glucose-6-phosphate isomerase, found in Saccharophagus degradans (strain 2-40 / ATCC 43961 / DSM 17024).